The sequence spans 338 residues: Glyceraldehyde-3-phosphate dehydrogenase, cytosolic (338 aa).

Residues 14–15 (RI), Asp-36, and Arg-83 contribute to the NAD(+) site. Residues 154–156 (SCT), Thr-185, 214–215 (TG), and Arg-237 contribute to the D-glyceraldehyde 3-phosphate site. Residue Cys-155 is the Nucleophile of the active site. An NAD(+)-binding site is contributed by Asn-319.

Belongs to the glyceraldehyde-3-phosphate dehydrogenase family. In terms of assembly, homotetramer.

The protein resides in the cytoplasm. It catalyses the reaction D-glyceraldehyde 3-phosphate + phosphate + NAD(+) = (2R)-3-phospho-glyceroyl phosphate + NADH + H(+). It functions in the pathway carbohydrate degradation; glycolysis; pyruvate from D-glyceraldehyde 3-phosphate: step 1/5. Functionally, key enzyme in glycolysis that catalyzes the first step of the pathway by converting D-glyceraldehyde 3-phosphate (G3P) into 3-phospho-D-glyceroyl phosphate. Essential for the maintenance of cellular ATP levels and carbohydrate metabolism. The protein is Glyceraldehyde-3-phosphate dehydrogenase, cytosolic (GAPC) of Ranunculus acris (Meadow buttercup).